Consider the following 191-residue polypeptide: Inosine triphosphate pyrophosphatase (191 aa).

Residue Thr12 to Lys17 participates in ITP binding. Glu42 contacts Mg(2+). Residues Lys54, Asp70–Thr71, Lys87, Phe145–Asp148, Lys168, and His173–Arg174 contribute to the ITP site.

Belongs to the HAM1 NTPase family. Homodimer. The cofactor is Mg(2+). It depends on Mn(2+) as a cofactor.

Its subcellular location is the cytoplasm. The enzyme catalyses ITP + H2O = IMP + diphosphate + H(+). It carries out the reaction dITP + H2O = dIMP + diphosphate + H(+). It catalyses the reaction XTP + H2O = XMP + diphosphate + H(+). Pyrophosphatase that hydrolyzes non-canonical purine nucleotides such as inosine triphosphate (ITP), deoxyinosine triphosphate (dITP) or xanthosine 5'-triphosphate (XTP) to their respective monophosphate derivatives. The enzyme does not distinguish between the deoxy- and ribose forms. Probably excludes non-canonical purines from RNA and DNA precursor pools, thus preventing their incorporation into RNA and DNA and avoiding chromosomal lesions. In Phytophthora infestans (strain T30-4) (Potato late blight agent), this protein is Inosine triphosphate pyrophosphatase.